We begin with the raw amino-acid sequence, 163 residues long: Large ribosomal subunit protein uL10 (163 aa).

It belongs to the universal ribosomal protein uL10 family. Part of the ribosomal stalk of the 50S ribosomal subunit. The N-terminus interacts with L11 and the large rRNA to form the base of the stalk. The C-terminus forms an elongated spine to which L12 dimers bind in a sequential fashion forming a multimeric L10(L12)X complex.

Forms part of the ribosomal stalk, playing a central role in the interaction of the ribosome with GTP-bound translation factors. This chain is Large ribosomal subunit protein uL10, found in Histophilus somni (strain 129Pt) (Haemophilus somnus).